Consider the following 243-residue polypeptide: GTP cyclohydrolase 1 (243 aa).

T15 is subject to Phosphothreonine. The disordered stretch occupies residues 18–55 (NIRPTSPYTLNPPVERDGFSWPSVGTRQRAEETEEEEK). S23 bears the Phosphoserine mark. Zn(2+) is bound by residues C132, H135, and C203.

This sequence belongs to the GTP cyclohydrolase I family. In terms of assembly, homodimer.

It catalyses the reaction GTP + H2O = 7,8-dihydroneopterin 3'-triphosphate + formate + H(+). It participates in cofactor biosynthesis; 7,8-dihydroneopterin triphosphate biosynthesis; 7,8-dihydroneopterin triphosphate from GTP: step 1/1. In terms of biological role, GTP cyclohydrolase 1 is the first enzyme in the biosynthetic pathway leading to folic acid. The chain is GTP cyclohydrolase 1 from Saccharomyces cerevisiae (strain ATCC 204508 / S288c) (Baker's yeast).